We begin with the raw amino-acid sequence, 290 residues long: ATP synthase gamma chain (290 aa).

The protein belongs to the ATPase gamma chain family. In terms of assembly, F-type ATPases have 2 components, CF(1) - the catalytic core - and CF(0) - the membrane proton channel. CF(1) has five subunits: alpha(3), beta(3), gamma(1), delta(1), epsilon(1). CF(0) has three main subunits: a, b and c.

It localises to the cell inner membrane. Its function is as follows. Produces ATP from ADP in the presence of a proton gradient across the membrane. The gamma chain is believed to be important in regulating ATPase activity and the flow of protons through the CF(0) complex. The protein is ATP synthase gamma chain of Dictyoglomus turgidum (strain DSM 6724 / Z-1310).